The following is a 233-amino-acid chain: Large ribosomal subunit protein uL1 (233 aa).

It belongs to the universal ribosomal protein uL1 family. Part of the 50S ribosomal subunit.

In terms of biological role, binds directly to 23S rRNA. The L1 stalk is quite mobile in the ribosome, and is involved in E site tRNA release. Functionally, protein L1 is also a translational repressor protein, it controls the translation of the L11 operon by binding to its mRNA. The polypeptide is Large ribosomal subunit protein uL1 (Shewanella halifaxensis (strain HAW-EB4)).